We begin with the raw amino-acid sequence, 74 residues long: Putative antitoxin VapB48 (74 aa).

Its function is as follows. Possibly the antitoxin component of a type II toxin-antitoxin (TA) system. Its cognate toxin is VapC48 (Potential). The chain is Putative antitoxin VapB48 (vapB48) from Mycobacterium tuberculosis (strain CDC 1551 / Oshkosh).